Reading from the N-terminus, the 194-residue chain is Imidazoleglycerol-phosphate dehydratase (194 aa).

The protein belongs to the imidazoleglycerol-phosphate dehydratase family.

It is found in the cytoplasm. The enzyme catalyses D-erythro-1-(imidazol-4-yl)glycerol 3-phosphate = 3-(imidazol-4-yl)-2-oxopropyl phosphate + H2O. Its pathway is amino-acid biosynthesis; L-histidine biosynthesis; L-histidine from 5-phospho-alpha-D-ribose 1-diphosphate: step 6/9. This chain is Imidazoleglycerol-phosphate dehydratase, found in Listeria monocytogenes serotype 4a (strain HCC23).